A 219-amino-acid polypeptide reads, in one-letter code: Transcriptional regulatory protein QseB (219 aa).

Positions 2 to 116 constitute a Response regulatory domain; sequence RILLIEDDML…EVAARLEALM (115 aa). At aspartate 51 the chain carries 4-aspartylphosphate. Residues 124 to 218 constitute a DNA-binding region (ompR/PhoB-type); sequence SNELRHGNVM…VHGIGYTLGE (95 aa).

In terms of processing, phosphorylated by QseC.

Its subcellular location is the cytoplasm. In terms of biological role, member of a two-component regulatory system QseB/QseC. Activates the flagella regulon by activating transcription of FlhDC. Currently it is not known whether this effect is direct or not. This Escherichia coli O157:H7 protein is Transcriptional regulatory protein QseB (qseB).